A 488-amino-acid chain; its full sequence is NADH-quinone oxidoreductase subunit N (488 aa).

14 helical membrane-spanning segments follow: residues Leu15–Tyr35, Gly42–Ala62, Asn79–Cys99, Leu108–Ala128, Leu133–Phe153, Phe168–Ala188, Trp209–Val229, Pro243–Val263, Trp277–Leu297, Met305–Thr325, Leu333–Leu353, Met376–Phe396, Val409–Tyr429, and Gly456–Ile476.

The protein belongs to the complex I subunit 2 family. In terms of assembly, NDH-1 is composed of 14 different subunits. Subunits NuoA, H, J, K, L, M, N constitute the membrane sector of the complex.

Its subcellular location is the cell inner membrane. It carries out the reaction a quinone + NADH + 5 H(+)(in) = a quinol + NAD(+) + 4 H(+)(out). Functionally, NDH-1 shuttles electrons from NADH, via FMN and iron-sulfur (Fe-S) centers, to quinones in the respiratory chain. The immediate electron acceptor for the enzyme in this species is believed to be ubiquinone. Couples the redox reaction to proton translocation (for every two electrons transferred, four hydrogen ions are translocated across the cytoplasmic membrane), and thus conserves the redox energy in a proton gradient. In Alkalilimnicola ehrlichii (strain ATCC BAA-1101 / DSM 17681 / MLHE-1), this protein is NADH-quinone oxidoreductase subunit N.